The sequence spans 619 residues: 1-deoxy-D-xylulose-5-phosphate synthase (619 aa).

Thiamine diphosphate is bound by residues His80 and Gly121–Ser123. Asp152 contacts Mg(2+). Residues Gly153–Ala154, Asn181, Tyr288, and Glu370 each bind thiamine diphosphate. Asn181 is a Mg(2+) binding site.

It belongs to the transketolase family. DXPS subfamily. As to quaternary structure, homodimer. Mg(2+) serves as cofactor. The cofactor is thiamine diphosphate.

The catalysed reaction is D-glyceraldehyde 3-phosphate + pyruvate + H(+) = 1-deoxy-D-xylulose 5-phosphate + CO2. Its pathway is metabolic intermediate biosynthesis; 1-deoxy-D-xylulose 5-phosphate biosynthesis; 1-deoxy-D-xylulose 5-phosphate from D-glyceraldehyde 3-phosphate and pyruvate: step 1/1. In terms of biological role, catalyzes the acyloin condensation reaction between C atoms 2 and 3 of pyruvate and glyceraldehyde 3-phosphate to yield 1-deoxy-D-xylulose-5-phosphate (DXP). The protein is 1-deoxy-D-xylulose-5-phosphate synthase of Yersinia pseudotuberculosis serotype O:3 (strain YPIII).